The chain runs to 329 residues: Protein RecA (329 aa).

ATP is bound at residue 63-70; sequence GNESSGKT.

The protein belongs to the RecA family.

It localises to the cytoplasm. In terms of biological role, can catalyze the hydrolysis of ATP in the presence of single-stranded DNA, the ATP-dependent uptake of single-stranded DNA by duplex DNA, and the ATP-dependent hybridization of homologous single-stranded DNAs. It interacts with LexA causing its activation and leading to its autocatalytic cleavage. This is Protein RecA from Malacoplasma penetrans (strain HF-2) (Mycoplasma penetrans).